The chain runs to 312 residues: Olfactory receptor 1D2 (312 aa).

Residues 1–25 lie on the Extracellular side of the membrane; sequence MDGGNQSEGSEFLLLGMSESPEQQR. Asn-5 carries an N-linked (GlcNAc...) asparagine glycan. The chain crosses the membrane as a helical span at residues 26 to 49; sequence ILFWMFLSMYLVTVVGNVLIILAI. The Cytoplasmic segment spans residues 50–57; the sequence is SSDSCLHT. Residues 58–79 form a helical membrane-spanning segment; that stretch reads PMYFFLANLSFTDLFFVTNTIP. Residues 80-100 lie on the Extracellular side of the membrane; the sequence is KMLVNLQSQNKAISYAGCLTQ. Cys-97 and Cys-189 are joined by a disulfide. A helical transmembrane segment spans residues 101-120; that stretch reads LYFLVSLVALDNLILAVMAY. The Cytoplasmic portion of the chain corresponds to 121-139; that stretch reads DRYVAICCPLHYTTAMSPK. A helical transmembrane segment spans residues 140–158; the sequence is LCILLLSLCWVLSVLYGLI. Residues 159 to 196 lie on the Extracellular side of the membrane; that stretch reads HTLLMTRVTFCGSRKIHYIFCEMYVLLRMACSNIQTNH. Residue Asn-195 is glycosylated (N-linked (GlcNAc...) asparagine). A helical transmembrane segment spans residues 197–219; that stretch reads TVLIATGCFIFLIPFGFVIISYV. Topologically, residues 220-236 are cytoplasmic; it reads LIIRAILRIPSLSKKYK. A helical transmembrane segment spans residues 237–259; the sequence is AFSTCASHLGAVSLFYGTLCMVY. The Extracellular segment spans residues 260–271; it reads LKPLHTYSVKDS. A helical transmembrane segment spans residues 272–291; the sequence is VATVMYAVVTPMMNPFIYSL. The Cytoplasmic segment spans residues 292–312; it reads RNKDMHGALGRLLDKHFKRLT.

This sequence belongs to the G-protein coupled receptor 1 family.

It localises to the cell membrane. In terms of biological role, odorant receptor. In Pan troglodytes (Chimpanzee), this protein is Olfactory receptor 1D2 (OR1D2).